The primary structure comprises 603 residues: Thread biopolymer filament subunit gamma (603 aa).

The head stretch occupies residues M1–K191. The IF rod domain maps to V158 to V476. A coil 1A region spans residues L193–E227. Residues R228–A240 are linker 1. A coil 1B region spans residues T241–Y341. The tract at residues Q342–Q362 is linker 12. The tract at residues I363–I381 is coil 2A. Residues N382–Q389 are linker 2. Positions P390–T510 are coil 2B. Positions T511 to Q603 are tail. Residues S562 to A587 are compositionally biased toward low complexity. A disordered region spans residues S562–Q603.

This sequence belongs to the intermediate filament family. Coiled-coil heterodimer of an alpha and a gamma subunit. Assemble into 10 nm filaments. Forms a massive, conical, intermediate filament biopolymer of approximately 60 cm.

The protein resides in the secreted. It is found in the extracellular space. Released extracellularly into seawater and provides physical and biological defense against invasive organism by modulation of the viscoelastic properties of mucus. The sequence is that of Thread biopolymer filament subunit gamma from Eptatretus stoutii (Pacific hagfish).